A 116-amino-acid chain; its full sequence is Large ribosomal subunit protein uL18 (116 aa).

This sequence belongs to the universal ribosomal protein uL18 family. As to quaternary structure, part of the 50S ribosomal subunit; part of the 5S rRNA/L5/L18/L25 subcomplex. Contacts the 5S and 23S rRNAs.

Functionally, this is one of the proteins that bind and probably mediate the attachment of the 5S RNA into the large ribosomal subunit, where it forms part of the central protuberance. The sequence is that of Large ribosomal subunit protein uL18 from Pseudomonas putida (strain GB-1).